The primary structure comprises 473 residues: 3-isopropylmalate dehydratase large subunit (473 aa).

3 residues coordinate [4Fe-4S] cluster: C354, C414, and C417.

The protein belongs to the aconitase/IPM isomerase family. LeuC type 1 subfamily. As to quaternary structure, heterodimer of LeuC and LeuD. [4Fe-4S] cluster is required as a cofactor.

The catalysed reaction is (2R,3S)-3-isopropylmalate = (2S)-2-isopropylmalate. It functions in the pathway amino-acid biosynthesis; L-leucine biosynthesis; L-leucine from 3-methyl-2-oxobutanoate: step 2/4. Its function is as follows. Catalyzes the isomerization between 2-isopropylmalate and 3-isopropylmalate, via the formation of 2-isopropylmaleate. The chain is 3-isopropylmalate dehydratase large subunit from Mycobacterium ulcerans (strain Agy99).